The chain runs to 860 residues: Transforming growth factor-beta receptor-associated protein 1 (860 aa).

A CNH domain is found at 24–297; that stretch reads HISIECVECC…HILQDFEGRV (274 aa). The CHCR repeat unit spans residues 564 to 732; it reads RPLDEQQQTS…YLRAGPSAQD (169 aa).

It belongs to the TRAP1 family. Interacts with TGFBR2 and ACVR2B; in the absence of ligand stimulation. Interacts with TGFBR1, ACVRL1, BMPR1A and ACVR1B; in the absence of ligand stimulation and to a less extent. Interacts with SMAD4; the interaction seems to be mutually exclusive with the interaction of SMAD4 and phosphorylated SMAD2. May interact with ALOX5. Interacts with RAB5C. Interacts with VPS8, VPS11 and VPS16. Component of the putative class C core vacuole/endosome tethering (CORVET) complex; the core of which composed of the class C Vps proteins VPS11, VPS16, VPS18 and VPS33A, is associated with VPS8 and TGFBRAP1.

The protein resides in the cytoplasm. It is found in the early endosome. Plays a role in the TGF-beta/activin signaling pathway. It associates with inactive heteromeric TGF-beta and activin receptor complexes, mainly through the type II receptor, and is released upon activation of signaling. May recruit SMAD4 to the vicinity of the receptor complex and facilitate its interaction with receptor-regulated Smads, such as SMAD2. Functionally, plays a role in vesicle-mediated protein trafficking of the endocytic membrane transport pathway. Believed to act as a component of the putative CORVET endosomal tethering complexes which is proposed to be involved in the Rab5-to-Rab7 endosome conversion probably implicating MON1A/B, and via binding SNAREs and SNARE complexes to mediate tethering and docking events during SNARE-mediated membrane fusion. The CORVET complex is proposed to function as a Rab5 effector to mediate early endosome fusion probably in specific endosome subpopulations. Functions predominantly in APPL1-containing endosomes and in degradative but not recycling trafficking of endocytosed cargo. The chain is Transforming growth factor-beta receptor-associated protein 1 (Tgfbrap1) from Mus musculus (Mouse).